The chain runs to 674 residues: UvrABC system protein C (674 aa).

The GIY-YIG domain occupies 16–95 (TNPGVYRFRD…IKEFKPRFNV (80 aa)). The UVR domain maps to 207-242 (KRFTNKLEKQMAAAVARLDYEQAARIRDDITALRKV).

Belongs to the UvrC family. In terms of assembly, interacts with UvrB in an incision complex.

The protein resides in the cytoplasm. Its function is as follows. The UvrABC repair system catalyzes the recognition and processing of DNA lesions. UvrC both incises the 5' and 3' sides of the lesion. The N-terminal half is responsible for the 3' incision and the C-terminal half is responsible for the 5' incision. The polypeptide is UvrABC system protein C (Pseudarthrobacter chlorophenolicus (strain ATCC 700700 / DSM 12829 / CIP 107037 / JCM 12360 / KCTC 9906 / NCIMB 13794 / A6) (Arthrobacter chlorophenolicus)).